Here is a 967-residue protein sequence, read N- to C-terminus: MNRFNGLCKVCSERRYRQITIRRGKDGFGFTICCDSPVRVQAVDSGGPAERAGLQQLDTVLQLNERPVEHWKCVELAHEIRSCPSEIILLVWRVVPQIKPGPDGGVLRRASCKSTHDLLSPPNKREKNCTHGAPTRPEQRHSCHLVCDSSDGLLLGGWERYTEVGKRSGQHTLPALSRATTPTDPNYIILAPLNPGSQLLRPVYQEDAIPEEPGTTTKGKSYTGLGKKSRLMKTVQTMKGHSNYQDCSALRPHIPHSSYGTYVTLAPKVLVFPVFVQPLDLCNPARTLLLSEELLLYEGRNKTSQVTLFAYSDLLLFTKEEEPGRCDVLRNPLYLQSVKLQEGSSEDLKFCVLYLAEKAECLFTLEAHSQEQKKRVCWCLSENIAKQQQLAATPTERKMFETEADEKEMPLVEGKGPGAEERTPSKDPSPSQELPPGQELPPSKDPSPSQELPPGQELPPSKDPSPSQELPPGQELPSSKNPSPSQELPAGQDLPPRKESFSGQEAAPGPESPSSEDIATCQNPPQSPETSTSKDSPPGQGSSPTTEVPSCQGLPAGQESTSQDPLLSQEPPAIPESSASDQNVLPSQESPPSQGSLSEKALAEQTISPGELPAATAGEPSASRPNFVIPEVRLDSAYSQQDGAHGGSSGEDEDAEEGEEGEEGEEDEEDDTNDDNYGDRNEAKRSSLIETGQGAEGGLSLRVQNSLRRRTHSEGSLLQEARGPCFASDTTLHCSDGEGTTSTWAIPSPRTLKKELGRNGGSMHHLSLFFTGHRKMSGTDLADDVEASRKRKSKNIAKDMKNKLAIFRRRNESPGAQPAGKADKTTKSFKPTSEEALKWSESLEKLLLHKYGLEVFQAFLRTEFSEENLEFWLACEDFKKVKSQSKMAAKAKKIFAEFIAIQACKEVNLDSYTREHTKENLQSITRGCFDLAQKRIFGLMEKDSYPRFLRSDLYLDLINQKKMSPPL.

Residues 18-95 (QITIRRGKDG…EIILLVWRVV (78 aa)) form the PDZ domain. A disordered region spans residues 115–135 (THDLLSPPNKREKNCTHGAPT). An Omega-N-methylarginine modification is found at Arg167. The interval 389-705 (QLAATPTERK…EGGLSLRVQN (317 aa)) is disordered. 3 stretches are compositionally biased toward polar residues: residues 476-486 (LPSSKNPSPSQ), 512-549 (SPSS…TEVP), and 577-597 (SSAS…QGSL). Residues 650–676 (GEDEDAEEGEEGEEGEEDEEDDTNDDN) are compositionally biased toward acidic residues. Over residues 677 to 687 (YGDRNEAKRSS) the composition is skewed to basic and acidic residues. Phosphoserine occurs at positions 713, 716, 748, and 777. Residues 807-830 (FRRRNESPGAQPAGKADKTTKSFK) form a disordered region. Positions 821 to 830 (KADKTTKSFK) are enriched in basic and acidic residues. One can recognise an RGS domain in the interval 842-967 (SLEKLLLHKY…INQKKMSPPL (126 aa)).

In terms of assembly, binds EFNB1 and EFNB2. Binds the GNB1-GNG2 heterodimer. Binds ESR1. In terms of processing, phosphorylated by cyclic GMP-dependent protein kinase. ISGylated. As to expression, detected in kidney, uterus, ovary, heart, brain, spleen, lung and testis.

Its subcellular location is the cytoplasm. It is found in the membrane. The protein resides in the nucleus. Down-regulates signaling from heterotrimeric G-proteins by increasing the GTPase activity of the alpha subunits, thereby driving them into their inactive GDP-bound form. Down-regulates G-protein-mediated release of inositol phosphates and activation of MAP kinases. The protein is Regulator of G-protein signaling 3 (Rgs3) of Rattus norvegicus (Rat).